Reading from the N-terminus, the 138-residue chain is Mu-like prophage FluMu G protein 2 (138 aa).

This sequence to phage Mu protein G.

The protein is Mu-like prophage FluMu G protein 2 of Haemophilus influenzae (strain ATCC 51907 / DSM 11121 / KW20 / Rd).